A 146-amino-acid chain; its full sequence is Large ribosomal subunit protein uL15 (146 aa).

Residues methionine 1–arginine 13 show a composition bias toward basic and acidic residues. Residues methionine 1–glutamate 51 form a disordered region. 2 stretches are compositionally biased toward gly residues: residues threonine 23–glutamine 35 and serine 42–glutamate 51.

The protein belongs to the universal ribosomal protein uL15 family. As to quaternary structure, part of the 50S ribosomal subunit.

In terms of biological role, binds to the 23S rRNA. The protein is Large ribosomal subunit protein uL15 of Streptococcus pneumoniae serotype 2 (strain D39 / NCTC 7466).